A 444-amino-acid polypeptide reads, in one-letter code: D(2) dopamine receptor (444 aa).

The Extracellular segment spans residues 1–37 (MDPLNLSWYDDDLERQNWSRPFNGSEGKPDRPHYNYY). N5, N17, and N23 each carry an N-linked (GlcNAc...) asparagine glycan. The helical transmembrane segment at 38-60 (AMLLTLLIFIIVFGNVLVCMAVS) threads the bilayer. The Cytoplasmic segment spans residues 61–70 (REKALQTTTN). Residues 71-93 (YLIVSLAVADLLVATLVMPWVVY) form a helical membrane-spanning segment. The Extracellular segment spans residues 94-108 (LEVVGEWKFSRIHCD). A disulfide bridge connects residues C107 and C182. A helical membrane pass occupies residues 109 to 130 (IFVTLDVMMCTASILNLCAISI). Residues 131–151 (DRYTAVAMPMLYNTRYSSKRR) lie on the Cytoplasmic side of the membrane. Residues 152-172 (VTVMIAIVWVLSFTISCPLLF) traverse the membrane as a helical segment. Topologically, residues 173 to 188 (GLNNTDQNECIIANPA) are extracellular. A helical transmembrane segment spans residues 189–213 (FVVYSSIVSFYVPFIVTLLVYIKIY). Residues 211–374 (KIYIVLRKRR…SQQKEKKATQ (164 aa)) are interaction with PPP1R9B. Over 214–374 (IVLRKRRKRV…SQQKEKKATQ (161 aa)) the chain is Cytoplasmic. The disordered stretch occupies residues 282–329 (EMLSSTSPPERTRYSPIPPSHHQLTLPDPSHHGLHSNPDSPAKPEKNG). The chain crosses the membrane as a helical span at residues 375 to 396 (MLAIVLGVFIICWLPFFITHIL). Topologically, residues 397-410 (NIHCDCNIPPVLYS) are extracellular. C400 and C402 are oxidised to a cystine. Residues 411–432 (AFTWLGYVNSAVNPIIYTTFNI) traverse the membrane as a helical segment. Over 433 to 444 (EFRKAFMKILHC) the chain is Cytoplasmic. C444 carries S-palmitoyl cysteine lipidation.

The protein belongs to the G-protein coupled receptor 1 family. Forms homo- and heterooligomers with DRD4. The interaction with DRD4 may modulate agonist-induced downstream signaling. Interacts with CADPS and CADPS2. Interacts with GPRASP1, PPP1R9B and CLIC6. Interacts with ARRB2. Interacts with HTR2A. Interacts with DRD1. In terms of assembly, interacts with KCNA2. Post-translationally, palmitoylated. Palmitoylation which is required for proper localization to the plasma membrane and stability of the receptor could be carried on by ZDHHC4, ZDHHC3 and ZDHHC8. In terms of tissue distribution, expressed in retinal hyaloid vessels at postnatal day 6. As to expression, expressed in the pituitary gland, stratum, brain stem and cortex. Expressed in the brain stem.

It is found in the cell membrane. The protein localises to the golgi apparatus membrane. In terms of biological role, dopamine receptor whose activity is mediated by G proteins which inhibit adenylyl cyclase. Positively regulates postnatal regression of retinal hyaloid vessels via suppression of VEGFR2/KDR activity, downstream of OPN5. In Mus musculus (Mouse), this protein is D(2) dopamine receptor (Drd2).